A 520-amino-acid polypeptide reads, in one-letter code: Putative cytochrome P450 CYP13A5 (520 aa).

Residue Cys-464 coordinates heme.

It belongs to the cytochrome P450 family. It depends on heme as a cofactor.

Functionally, cytochromes P450 are a group of heme-thiolate monooxygenases. They oxidize a variety of structurally unrelated compounds, including steroids, fatty acids, and xenobiotics. The sequence is that of Putative cytochrome P450 CYP13A5 (cyp-13A5) from Caenorhabditis elegans.